We begin with the raw amino-acid sequence, 1025 residues long: Kinesin-like protein KIN-14P (1025 aa).

Disordered regions lie at residues M1–G87 and Y263–E286. A compositionally biased stretch (low complexity) spans S15–S28. A compositionally biased stretch (basic and acidic residues) spans V29–T41. Residues P42–S53 are compositionally biased toward low complexity. Positions K65–Q75 are enriched in polar residues. Residues H203 to N425 are a coiled coil. Residues T270 to E286 are compositionally biased toward basic and acidic residues. The Kinesin motor domain maps to N509–V838. G593–T600 is an ATP binding site. A coiled-coil region spans residues K847 to Q879. Disordered stretches follow at residues Q881–A926, A939–D977, and T994–A1025. Polar residues-rich tracts occupy residues S901–S913 and A939–I948. A compositionally biased stretch (basic and acidic residues) spans V950–K962. Composition is skewed to low complexity over residues S963 to R974 and S998 to S1016.

Belongs to the TRAFAC class myosin-kinesin ATPase superfamily. Kinesin family. KIN-14 subfamily.

The chain is Kinesin-like protein KIN-14P from Arabidopsis thaliana (Mouse-ear cress).